The following is a 386-amino-acid chain: Delta(7)-sterol 5(6)-desaturase ERG3 (386 aa).

Transmembrane regions (helical) follow at residues 120 to 140, 172 to 192, and 206 to 226; these read LSLF…VAYL, IPVM…GYSF, and AILW…YFLH. The Fatty acid hydroxylase domain maps to 214–337; it reads FILFTDCGIY…FTTLWDRLGN (124 aa). The Histidine box-1 signature appears at 226–230; it reads HRWLH. A Histidine box-2 motif is present at residues 239–243; that stretch reads HKPHH. Residues 272–292 form a helical membrane-spanning segment; it reads PLLFPLHKVLYLFLFTFVNFW. The Histidine box-3 signature appears at 314-318; sequence HTVHH.

It belongs to the sterol desaturase family. Fe cation serves as cofactor.

The protein localises to the endoplasmic reticulum membrane. It catalyses the reaction a Delta(7)-sterol + 2 Fe(II)-[cytochrome b5] + O2 + 2 H(+) = a Delta(5),Delta(7)-sterol + 2 Fe(III)-[cytochrome b5] + 2 H2O. It participates in steroid metabolism; ergosterol biosynthesis; ergosterol from zymosterol: step 3/5. Its function is as follows. C-5 sterol desaturase; part of the third module of ergosterol biosynthesis pathway that includes the late steps of the pathwa. ERG3 catalyzes the introduction of a C-5 double bond in the B ring to produce 5-dehydroepisterol. The third module or late pathway involves the ergosterol synthesis itself through consecutive reactions that mainly occur in the endoplasmic reticulum (ER) membrane. Firstly, the squalene synthase ERG9 catalyzes the condensation of 2 farnesyl pyrophosphate moieties to form squalene, which is the precursor of all steroids. Squalene synthase is crucial for balancing the incorporation of farnesyl diphosphate (FPP) into sterol and nonsterol isoprene synthesis. Secondly, the squalene epoxidase ERG1 catalyzes the stereospecific oxidation of squalene to (S)-2,3-epoxysqualene, which is considered to be a rate-limiting enzyme in steroid biosynthesis. Then, the lanosterol synthase ERG7 catalyzes the cyclization of (S)-2,3 oxidosqualene to lanosterol, a reaction that forms the sterol core. In the next steps, lanosterol is transformed to zymosterol through a complex process involving various demethylation, reduction and desaturation reactions. The lanosterol 14-alpha-demethylase ERG11 (also known as CYP51) catalyzes C14-demethylation of lanosterol to produce 4,4'-dimethyl cholesta-8,14,24-triene-3-beta-ol, which is critical for ergosterol biosynthesis. The C-14 reductase ERG24 reduces the C14=C15 double bond of 4,4-dimethyl-cholesta-8,14,24-trienol to produce 4,4-dimethyl-cholesta-8,24-dienol. 4,4-dimethyl-cholesta-8,24-dienol is substrate of the C-4 demethylation complex ERG25-ERG26-ERG27 in which ERG25 catalyzes the three-step monooxygenation required for the demethylation of 4,4-dimethyl and 4alpha-methylsterols, ERG26 catalyzes the oxidative decarboxylation that results in a reduction of the 3-beta-hydroxy group at the C-3 carbon to an oxo group, and ERG27 is responsible for the reduction of the keto group on the C-3. ERG28 has a role as a scaffold to help anchor ERG25, ERG26 and ERG27 to the endoplasmic reticulum and ERG29 regulates the activity of the iron-containing C4-methylsterol oxidase ERG25. Then, the sterol 24-C-methyltransferase ERG6 catalyzes the methyl transfer from S-adenosyl-methionine to the C-24 of zymosterol to form fecosterol. The C-8 sterol isomerase ERG2 catalyzes the reaction which results in unsaturation at C-7 in the B ring of sterols and thus converts fecosterol to episterol. The sterol-C5-desaturase ERG3 then catalyzes the introduction of a C-5 double bond in the B ring to produce 5-dehydroepisterol. The C-22 sterol desaturase ERG5 further converts 5-dehydroepisterol into ergosta-5,7,22,24(28)-tetraen-3beta-ol by forming the C-22(23) double bond in the sterol side chain. Finally, ergosta-5,7,22,24(28)-tetraen-3beta-ol is substrate of the C-24(28) sterol reductase ERG4 to produce ergosterol. The chain is Delta(7)-sterol 5(6)-desaturase ERG3 from Candida albicans (strain SC5314 / ATCC MYA-2876) (Yeast).